Consider the following 385-residue polypeptide: tRNA-specific 2-thiouridylase MnmA (385 aa).

ATP is bound by residues 27–34 and Leu53; that span reads AMSGGVDS. Cys121 acts as the Nucleophile in catalysis. An intrachain disulfide couples Cys121 to Cys217. Gly145 contributes to the ATP binding site. Positions 167–169 are interaction with tRNA; it reads KDQ. The Cysteine persulfide intermediate role is filled by Cys217.

It belongs to the MnmA/TRMU family.

Its subcellular location is the cytoplasm. It carries out the reaction S-sulfanyl-L-cysteinyl-[protein] + uridine(34) in tRNA + AH2 + ATP = 2-thiouridine(34) in tRNA + L-cysteinyl-[protein] + A + AMP + diphosphate + H(+). Catalyzes the 2-thiolation of uridine at the wobble position (U34) of tRNA, leading to the formation of s(2)U34. In Sorangium cellulosum (strain So ce56) (Polyangium cellulosum (strain So ce56)), this protein is tRNA-specific 2-thiouridylase MnmA.